We begin with the raw amino-acid sequence, 252 residues long: tRNA pseudouridine synthase A (252 aa).

Aspartate 52 (nucleophile) is an active-site residue. Tyrosine 111 contributes to the substrate binding site.

The protein belongs to the tRNA pseudouridine synthase TruA family. In terms of assembly, homodimer.

The catalysed reaction is uridine(38/39/40) in tRNA = pseudouridine(38/39/40) in tRNA. In terms of biological role, formation of pseudouridine at positions 38, 39 and 40 in the anticodon stem and loop of transfer RNAs. This is tRNA pseudouridine synthase A from Parabacteroides distasonis (strain ATCC 8503 / DSM 20701 / CIP 104284 / JCM 5825 / NCTC 11152).